A 203-amino-acid polypeptide reads, in one-letter code: Urease accessory protein UreG (203 aa).

10-17 (GPVGAGKT) lines the GTP pocket.

It belongs to the SIMIBI class G3E GTPase family. UreG subfamily. Homodimer. UreD, UreF and UreG form a complex that acts as a GTP-hydrolysis-dependent molecular chaperone, activating the urease apoprotein by helping to assemble the nickel containing metallocenter of UreC. The UreE protein probably delivers the nickel.

Its subcellular location is the cytoplasm. In terms of biological role, facilitates the functional incorporation of the urease nickel metallocenter. This process requires GTP hydrolysis, probably effectuated by UreG. This chain is Urease accessory protein UreG, found in Lachnoclostridium phytofermentans (strain ATCC 700394 / DSM 18823 / ISDg) (Clostridium phytofermentans).